The chain runs to 469 residues: Glutamate-1-semialdehyde 2,1-aminomutase, chloroplastic (469 aa).

Residues methionine 1 to alanine 34 constitute a chloroplast transit peptide. Lysine 309 is subject to N6-(pyridoxal phosphate)lysine.

This sequence belongs to the class-III pyridoxal-phosphate-dependent aminotransferase family. HemL subfamily. As to quaternary structure, homodimer. Requires pyridoxal 5'-phosphate as cofactor.

The protein resides in the plastid. It is found in the chloroplast. It carries out the reaction (S)-4-amino-5-oxopentanoate = 5-aminolevulinate. It participates in porphyrin-containing compound metabolism; protoporphyrin-IX biosynthesis; 5-aminolevulinate from L-glutamyl-tRNA(Glu): step 2/2. Its pathway is porphyrin-containing compound metabolism; chlorophyll biosynthesis. This chain is Glutamate-1-semialdehyde 2,1-aminomutase, chloroplastic (GSA), found in Hordeum vulgare (Barley).